The primary structure comprises 72 residues: Large ribosomal subunit protein bL31 (72 aa).

Zn(2+)-binding residues include Cys16, Cys18, Cys38, and Cys41.

The protein belongs to the bacterial ribosomal protein bL31 family. Type A subfamily. As to quaternary structure, part of the 50S ribosomal subunit. Zn(2+) serves as cofactor.

Binds the 23S rRNA. The protein is Large ribosomal subunit protein bL31 of Azoarcus sp. (strain BH72).